Reading from the N-terminus, the 256-residue chain is MIQSITSQGLVLYNRNFREDDKLVKIFTEQVGKRMFFVKHAGQSKLAPVIQPLVLARFLLRINDDGLSYIEDYHEVMTFPKINSDLFVMAYATYVAALADASLQDNQQDAPLFAFLQKTLELMEAGLDYQVLTNIFEIQILTRFGISLNFNECVFCHRVGQAFDFSFKYGACLCPEHYHEDKRRCHLNPNIPYLLNQFQAIDFETLETISLKPGIKQELRQFMDQLYEEYVGIHLKSKKFIDSLADWGQLLKEEKK.

Belongs to the RecO family.

Involved in DNA repair and RecF pathway recombination. The protein is DNA repair protein RecO of Streptococcus pneumoniae (strain Hungary19A-6).